The following is a 125-amino-acid chain: Ribosome-binding factor A (125 aa).

It belongs to the RbfA family. Monomer. Binds 30S ribosomal subunits, but not 50S ribosomal subunits or 70S ribosomes.

It localises to the cytoplasm. Functionally, one of several proteins that assist in the late maturation steps of the functional core of the 30S ribosomal subunit. Associates with free 30S ribosomal subunits (but not with 30S subunits that are part of 70S ribosomes or polysomes). Required for efficient processing of 16S rRNA. May interact with the 5'-terminal helix region of 16S rRNA. In Desulfitobacterium hafniense (strain DSM 10664 / DCB-2), this protein is Ribosome-binding factor A.